A 207-amino-acid polypeptide reads, in one-letter code: NADH-quinone oxidoreductase subunit C (207 aa).

It belongs to the complex I 30 kDa subunit family. In terms of assembly, NDH-1 is composed of 14 different subunits. Subunits NuoB, C, D, E, F, and G constitute the peripheral sector of the complex.

The protein localises to the cell inner membrane. The enzyme catalyses a quinone + NADH + 5 H(+)(in) = a quinol + NAD(+) + 4 H(+)(out). Functionally, NDH-1 shuttles electrons from NADH, via FMN and iron-sulfur (Fe-S) centers, to quinones in the respiratory chain. The immediate electron acceptor for the enzyme in this species is believed to be ubiquinone. Couples the redox reaction to proton translocation (for every two electrons transferred, four hydrogen ions are translocated across the cytoplasmic membrane), and thus conserves the redox energy in a proton gradient. The chain is NADH-quinone oxidoreductase subunit C from Thermus thermophilus (strain ATCC BAA-163 / DSM 7039 / HB27).